A 248-amino-acid chain; its full sequence is MSVSPVSIVSTPVAVSASPAGAPVQPVTVRWRGREAYEASFDAMRAFTDTRTADTGDEIWVVEHPPVYTLGQAGDPAHLLVADSGVPLVKVDRGGQITYHGPGQIVVYLLLDLRRRKLMVRTLVTKIEEAVIETLAAYNLASVRKAGAPGIYVASGVHEGAKIAALGLKIRNGCSYHGLSLNVKMDLRPFLAINPCGYAGLETVDMASLAVAADWNDVAHTLVGRLIANLDGASAAADKPHALEQSND.

Residues 53–238 enclose the BPL/LPL catalytic domain; it reads ADTGDEIWVV…NLDGASAAAD (186 aa). Substrate contacts are provided by residues 93–100, 165–167, and 178–180; these read RGGQITYH, ALG, and GLS. The Acyl-thioester intermediate role is filled by cysteine 196.

The protein belongs to the LipB family.

It localises to the cytoplasm. The enzyme catalyses octanoyl-[ACP] + L-lysyl-[protein] = N(6)-octanoyl-L-lysyl-[protein] + holo-[ACP] + H(+). It participates in protein modification; protein lipoylation via endogenous pathway; protein N(6)-(lipoyl)lysine from octanoyl-[acyl-carrier-protein]: step 1/2. In terms of biological role, catalyzes the transfer of endogenously produced octanoic acid from octanoyl-acyl-carrier-protein onto the lipoyl domains of lipoate-dependent enzymes. Lipoyl-ACP can also act as a substrate although octanoyl-ACP is likely to be the physiological substrate. This is Octanoyltransferase from Burkholderia orbicola (strain MC0-3).